Reading from the N-terminus, the 529-residue chain is Listeriolysin O (529 aa).

The first 24 residues, 1–24 (MKKIMLVFITLILISLPIAQQTEA), serve as a signal peptide directing secretion. The interval 35–54 (SISSMAPPASPPASPKTPIE) is disordered. 4 beta stranded membrane-spanning segments follow: residues 214 to 227 (ESQL…AFKA), 234 to 243 (VNFGAISEGK), 312 to 321 (STKVKAAFDA), and 329 to 341 (SGDV…IKNS). The short motif at 483 to 493 (ECTGLAWEWWR) is the Conserved undecapeptide element. Positions 515–516 (TL) match the Cholesterol binding motif.

Belongs to the cholesterol-dependent cytolysin family. In terms of assembly, homooligomeric pore complex of 35 to 50 subunits; when inserted in the host membrane.

It is found in the secreted. It localises to the host membrane. The protein localises to the host cell membrane. Its activity is regulated as follows. Activity of listeriolysin O is regulated on multiple levels. It should be high in the phagosome, thereby allowing escape of the bacteria from the phagosomal compartment. Then, once inside the host cytosol, the activity must be controlled to prevent lysis of the host plasma membrane and loss of the intracellular environment. Its function is as follows. A cholesterol-dependent toxin that causes cytolysis by forming pores in cholesterol containing host membranes. After binding to target membranes, the protein undergoes a major conformation change, leading to its insertion in the host membrane and formation of an oligomeric pore complex. Cholesterol is required for binding to host membranes, membrane insertion and pore formation; cholesterol binding is mediated by a Thr-Leu pair in the C-terminus. Acts as a major virulence factor required for the escape of bacteria from phagosomal vacuoles and entry into the host cytosol. Can be reversibly inactivated by oxidation. The sequence is that of Listeriolysin O (hly) from Listeria monocytogenes serotype 4a (strain HCC23).